Here is a 244-residue protein sequence, read N- to C-terminus: Glutathione S-transferase theta-2 (244 aa).

Residues 2 to 82 (GLELFLDLVS…YLSCKYQTPD (81 aa)) form the GST N-terminal domain. Glutathione-binding positions include 40–41 (HK), 53–54 (KL), 66–67 (ES), and 104–107 (DCIR). Positions 88-224 (DLQARARVHE…SILEQAAKKT (137 aa)) constitute a GST C-terminal domain.

It belongs to the GST superfamily. Theta family. In terms of assembly, homodimer. As to expression, expressed at low levels in liver. In lung, expressed at low levels in ciliated bronchiolar cells, alveolar macrophages and alveolar type II cells.

The protein resides in the cytoplasm. It localises to the cytosol. Its subcellular location is the nucleus. It catalyses the reaction RX + glutathione = an S-substituted glutathione + a halide anion + H(+). In terms of biological role, conjugation of reduced glutathione to a wide number of exogenous and endogenous hydrophobic electrophiles. Has a sulfatase activity. The sequence is that of Glutathione S-transferase theta-2 (GSTT2) from Homo sapiens (Human).